A 363-amino-acid chain; its full sequence is Spermidine/putrescine import ATP-binding protein PotA (363 aa).

Residues 5-236 (IKLKHVRKEY…PVNDFVARFI (232 aa)) form the ABC transporter domain. Position 38–45 (38–45 (GPSGSGKT)) interacts with ATP.

It belongs to the ABC transporter superfamily. Spermidine/putrescine importer (TC 3.A.1.11.1) family. The complex is composed of two ATP-binding proteins (PotA), two transmembrane proteins (PotB and PotC) and a solute-binding protein (PotD).

The protein resides in the cell membrane. The catalysed reaction is ATP + H2O + polyamine-[polyamine-binding protein]Side 1 = ADP + phosphate + polyamineSide 2 + [polyamine-binding protein]Side 1.. Part of the ABC transporter complex PotABCD involved in spermidine/putrescine import. Responsible for energy coupling to the transport system. The sequence is that of Spermidine/putrescine import ATP-binding protein PotA from Lactobacillus johnsonii (strain CNCM I-12250 / La1 / NCC 533).